Reading from the N-terminus, the 79-residue chain is Pigment-dispersing hormone type 1 (79 aa).

Positions 1–22 are cleaved as a signal peptide; sequence MRSAVVVALLVMVAMSLQLTAA. The residue at position 76 (A76) is an Alanine amide.

This sequence belongs to the arthropod PDH family. As to expression, eyestalk.

Its subcellular location is the secreted. Functionally, the pigment-dispersing hormone causes the migration of the distal retinal pigment into the proximal end of the pigment chromatophore cells and thus decreases the amount of light entering the retinulas. May also function as a neurotransmitter and/or neuromodulator. This chain is Pigment-dispersing hormone type 1 (PDH1), found in Penaeus vannamei (Whiteleg shrimp).